A 500-amino-acid chain; its full sequence is Lysine--tRNA ligase (500 aa).

Positions 410 and 417 each coordinate Mg(2+).

Belongs to the class-II aminoacyl-tRNA synthetase family. As to quaternary structure, homodimer. The cofactor is Mg(2+).

The protein localises to the cytoplasm. It carries out the reaction tRNA(Lys) + L-lysine + ATP = L-lysyl-tRNA(Lys) + AMP + diphosphate. In Pseudomonas syringae pv. syringae (strain B728a), this protein is Lysine--tRNA ligase.